A 419-amino-acid polypeptide reads, in one-letter code: Glutamyl-tRNA reductase (419 aa).

Residues 49–52 (TCNR), S107, 112–114 (EPQ), and Q118 contribute to the substrate site. Residue C50 is the Nucleophile of the active site. 187–192 (GAGETI) contributes to the NADP(+) binding site.

Belongs to the glutamyl-tRNA reductase family. Homodimer.

The enzyme catalyses (S)-4-amino-5-oxopentanoate + tRNA(Glu) + NADP(+) = L-glutamyl-tRNA(Glu) + NADPH + H(+). It functions in the pathway porphyrin-containing compound metabolism; protoporphyrin-IX biosynthesis; 5-aminolevulinate from L-glutamyl-tRNA(Glu): step 1/2. In terms of biological role, catalyzes the NADPH-dependent reduction of glutamyl-tRNA(Glu) to glutamate 1-semialdehyde (GSA). This is Glutamyl-tRNA reductase from Vibrio vulnificus (strain CMCP6).